We begin with the raw amino-acid sequence, 340 residues long: Ribose-phosphate pyrophosphokinase (340 aa).

ATP is bound by residues 47–49 and 106–107; these read NGE and RQ. Residues His140 and Asp182 each coordinate Mg(2+). Lys206 is an active-site residue. D-ribose 5-phosphate is bound by residues Arg208, Asp234, and 238 to 242; that span reads DTAGT.

It belongs to the ribose-phosphate pyrophosphokinase family. Class I subfamily. As to quaternary structure, homohexamer. Requires Mg(2+) as cofactor.

It localises to the cytoplasm. The enzyme catalyses D-ribose 5-phosphate + ATP = 5-phospho-alpha-D-ribose 1-diphosphate + AMP + H(+). It functions in the pathway metabolic intermediate biosynthesis; 5-phospho-alpha-D-ribose 1-diphosphate biosynthesis; 5-phospho-alpha-D-ribose 1-diphosphate from D-ribose 5-phosphate (route I): step 1/1. Functionally, involved in the biosynthesis of the central metabolite phospho-alpha-D-ribosyl-1-pyrophosphate (PRPP) via the transfer of pyrophosphoryl group from ATP to 1-hydroxyl of ribose-5-phosphate (Rib-5-P). This Bifidobacterium longum (strain NCC 2705) protein is Ribose-phosphate pyrophosphokinase.